Consider the following 239-residue polypeptide: N-glycosylase/DNA lyase (239 aa).

Residues Q24, S51, and W62 each contribute to the 8-oxoguanine site. The interval 118-182 (ERYYEDMTLL…EDVRIIKLTR (65 aa)) is helix-hairpin-helix. The active-site Schiff-base intermediate with DNA is K142. F146 and P172 together coordinate 8-oxoguanine. The active site involves D174. 8-oxoguanine is bound by residues D208 and W212.

The protein belongs to the archaeal N-glycosylase/DNA lyase (AGOG) family.

The enzyme catalyses 2'-deoxyribonucleotide-(2'-deoxyribose 5'-phosphate)-2'-deoxyribonucleotide-DNA = a 3'-end 2'-deoxyribonucleotide-(2,3-dehydro-2,3-deoxyribose 5'-phosphate)-DNA + a 5'-end 5'-phospho-2'-deoxyribonucleoside-DNA + H(+). In terms of biological role, DNA repair enzyme that is part of the base excision repair (BER) pathway; protects from oxidative damage by removing the major product of DNA oxidation, 8-oxoguanine (GO), from single- and double-stranded DNA substrates. In Pyrococcus horikoshii (strain ATCC 700860 / DSM 12428 / JCM 9974 / NBRC 100139 / OT-3), this protein is N-glycosylase/DNA lyase.